We begin with the raw amino-acid sequence, 494 residues long: Probable cytosol aminopeptidase (494 aa).

Mn(2+) is bound by residues Lys260 and Asp265. Lys272 is an active-site residue. Mn(2+) is bound by residues Asp283, Asp342, and Glu344. Arg346 is a catalytic residue.

Belongs to the peptidase M17 family. Mn(2+) serves as cofactor.

Its subcellular location is the cytoplasm. It carries out the reaction Release of an N-terminal amino acid, Xaa-|-Yaa-, in which Xaa is preferably Leu, but may be other amino acids including Pro although not Arg or Lys, and Yaa may be Pro. Amino acid amides and methyl esters are also readily hydrolyzed, but rates on arylamides are exceedingly low.. The catalysed reaction is Release of an N-terminal amino acid, preferentially leucine, but not glutamic or aspartic acids.. In terms of biological role, presumably involved in the processing and regular turnover of intracellular proteins. Catalyzes the removal of unsubstituted N-terminal amino acids from various peptides. The chain is Probable cytosol aminopeptidase from Bacillus cereus (strain ATCC 10987 / NRS 248).